We begin with the raw amino-acid sequence, 213 residues long: Large ribosomal subunit protein uL3 (213 aa).

This sequence belongs to the universal ribosomal protein uL3 family. As to quaternary structure, part of the 50S ribosomal subunit. Forms a cluster with proteins L14 and L19.

Functionally, one of the primary rRNA binding proteins, it binds directly near the 3'-end of the 23S rRNA, where it nucleates assembly of the 50S subunit. This chain is Large ribosomal subunit protein uL3, found in Bifidobacterium longum (strain DJO10A).